A 514-amino-acid polypeptide reads, in one-letter code: tRNA-2-methylthio-N(6)-dimethylallyladenosine synthase (514 aa).

The tract at residues 1–21 (MNEEQRKASSVDVLAERDKKA) is disordered. The 119-residue stretch at 68-186 (RTFLIKTYGC…LPEILEEAYL (119 aa)) folds into the MTTase N-terminal domain. Positions 77, 113, 147, 223, 227, and 230 each coordinate [4Fe-4S] cluster. Positions 209–440 (REGNIKAWVN…KKVGHYSQIA (232 aa)) constitute a Radical SAM core domain. Residues 442–505 (SKYEGQTVTV…QYSLNGSFVK (64 aa)) enclose the TRAM domain.

The protein belongs to the methylthiotransferase family. MiaB subfamily. In terms of assembly, monomer. Requires [4Fe-4S] cluster as cofactor.

Its subcellular location is the cytoplasm. The enzyme catalyses N(6)-dimethylallyladenosine(37) in tRNA + (sulfur carrier)-SH + AH2 + 2 S-adenosyl-L-methionine = 2-methylsulfanyl-N(6)-dimethylallyladenosine(37) in tRNA + (sulfur carrier)-H + 5'-deoxyadenosine + L-methionine + A + S-adenosyl-L-homocysteine + 2 H(+). In terms of biological role, catalyzes the methylthiolation of N6-(dimethylallyl)adenosine (i(6)A), leading to the formation of 2-methylthio-N6-(dimethylallyl)adenosine (ms(2)i(6)A) at position 37 in tRNAs that read codons beginning with uridine. The chain is tRNA-2-methylthio-N(6)-dimethylallyladenosine synthase from Staphylococcus aureus (strain N315).